We begin with the raw amino-acid sequence, 53 residues long: Conotoxin Bu27 (53 aa).

Residues 1–12 (ASDGRNAVVHER) constitute a propeptide that is removed on maturation. The residue at position 14 (P14) is a 4-hydroxyproline. E15 is subject to 4-carboxyglutamate. O-linked (HexNAc...) threonine glycosylation is found at T19 and T21. A 4-hydroxyproline mark is found at P29, P34, P35, P43, P44, and P48. Position 48 is a proline amide (P48). The propeptide occupies 49–53 (GRRND).

The protein belongs to the conotoxin A superfamily. In terms of processing, contains 3 disulfide bonds. In terms of tissue distribution, expressed by the venom duct.

It localises to the secreted. Probable neurotoxin with ion channel inhibitor activity. This Conus bullatus (Bubble cone) protein is Conotoxin Bu27.